We begin with the raw amino-acid sequence, 807 residues long: Glycerol-3-phosphate acyltransferase (807 aa).

An HXXXXD motif motif is present at residues 308–313 (CHRSHM).

It belongs to the GPAT/DAPAT family.

It localises to the cell inner membrane. The catalysed reaction is sn-glycerol 3-phosphate + an acyl-CoA = a 1-acyl-sn-glycero-3-phosphate + CoA. It functions in the pathway phospholipid metabolism; CDP-diacylglycerol biosynthesis; CDP-diacylglycerol from sn-glycerol 3-phosphate: step 1/3. The polypeptide is Glycerol-3-phosphate acyltransferase (Shewanella baltica (strain OS223)).